The primary structure comprises 435 residues: Enolase (435 aa).

Residue Q163 coordinates (2R)-2-phosphoglycerate. The Proton donor role is filled by E205. Mg(2+) is bound by residues D243, E292, and D319. (2R)-2-phosphoglycerate-binding residues include K344, R373, S374, and K395. K344 functions as the Proton acceptor in the catalytic mechanism.

It belongs to the enolase family. It depends on Mg(2+) as a cofactor.

The protein resides in the cytoplasm. The protein localises to the secreted. Its subcellular location is the cell surface. It catalyses the reaction (2R)-2-phosphoglycerate = phosphoenolpyruvate + H2O. It functions in the pathway carbohydrate degradation; glycolysis; pyruvate from D-glyceraldehyde 3-phosphate: step 4/5. Its function is as follows. Catalyzes the reversible conversion of 2-phosphoglycerate (2-PG) into phosphoenolpyruvate (PEP). It is essential for the degradation of carbohydrates via glycolysis. This chain is Enolase, found in Streptococcus suis (strain 98HAH33).